Here is a 193-residue protein sequence, read N- to C-terminus: Acyl carrier protein phosphodiesterase (193 aa).

The protein belongs to the AcpH family.

The enzyme catalyses holo-[ACP] + H2O = apo-[ACP] + (R)-4'-phosphopantetheine + H(+). In terms of biological role, converts holo-ACP to apo-ACP by hydrolytic cleavage of the phosphopantetheine prosthetic group from ACP. The chain is Acyl carrier protein phosphodiesterase from Escherichia coli O6:K15:H31 (strain 536 / UPEC).